Consider the following 470-residue polypeptide: uncharacterized protein (470 aa).

Residues 418–453 (SECCEEQEEKEKKKEKEKEKKKEKDDDDDQQNNNNN) adopt a coiled-coil conformation. The tract at residues 423 to 470 (EQEEKEKKKEKEKEKKKEKDDDDDQQNNNNNDQNGLGLGLGLNFGLNL) is disordered. Over residues 426–441 (EKEKKKEKEKEKKKEK) the composition is skewed to basic and acidic residues. Residues 448-457 (QNNNNNDQNG) are compositionally biased toward low complexity.

This is an uncharacterized protein from Acidianus bottle-shaped virus (isolate Italy/Pozzuoli) (ABV).